Here is a 979-residue protein sequence, read N- to C-terminus: Glutamate receptor ionotropic, kainate 5 (979 aa).

The N-terminal stretch at 1-14 is a signal peptide; it reads MPAELLLLLIVAFA. Topologically, residues 15–544 are extracellular; the sequence is NPSCQVLSSL…YFSFLDPFSP (530 aa). Disulfide bonds link Cys36–Cys292, Cys83–Cys334, and Cys165–Cys170. N-linked (GlcNAc...) asparagine glycosylation is found at Asn219, Asn271, Asn285, Asn322, Asn372, Asn394, Asn400, Asn407, Asn414, and Asn478. Residues 545 to 565 traverse the membrane as a helical segment; the sequence is AVWLFMLLAYLAVSCVLFLAA. The Cytoplasmic portion of the chain corresponds to 566–622; it reads RLSPYEWYNPHPCLRARPHILENQYTLGNSLWFPVGGFMQQGSEIMPRALSTRCVSG. Residues 623–643 form a helical membrane-spanning segment; the sequence is VWWAFTLIIISSYTANLAAFL. Residues 644-803 are Extracellular-facing; it reads TVQRMEVPVE…HRAKGLGMEN (160 aa). N-linked (GlcNAc...) asparagine glycosylation occurs at Asn735. The chain crosses the membrane as a helical span at residues 804-824; that stretch reads IGGIFVVLICGLIIAVFVAVM. Topologically, residues 825-979 are cytoplasmic; that stretch reads EFIWSTRRSA…TGPRELTEHE (155 aa). Positions 856-867 are enriched in basic residues; the sequence is RKTSRSRRRRRP. Disordered regions lie at residues 856–875, 890–925, and 942–979; these read RKTSRSRRRRRPGGPSRALL, LYSAGAGGDAGAHGGPQRLLDDPGPPGGPRPQAPTP, and RASGAGAPPRGLGTPAEATSPPRPRPGPTGPRELTEHE. Over residues 894-903 the composition is skewed to gly residues; sequence GAGGDAGAHG. Residues 912–923 are compositionally biased toward pro residues; it reads PGPPGGPRPQAP.

The protein belongs to the glutamate-gated ion channel (TC 1.A.10.1) family. GRIK5 subfamily. In terms of assembly, homotetramer. Heterotetramer with GRIK2. Can form functional heteromeric receptors with GRIK1, GRIK2 and GRIK3. Forms a heteromeric complex with GRIK2. Expressed in the hippocampal mossy fiber synapses (at protein level).

Its subcellular location is the cell membrane. It is found in the postsynaptic cell membrane. The protein resides in the presynaptic cell membrane. In terms of biological role, ionotropic glutamate receptor that functions as a cation-permeable ligand-gated ion channel, gated by L-glutamate and the glutamatergic agonist kainic acid. Cannot form functional channels on its own and produces channel activity only in heteromeric assembly with GRIK2 subunit. Can form functional heteromeric receptors with GRIK1 and GRIK3. The polypeptide is Glutamate receptor ionotropic, kainate 5 (Grik5) (Mus musculus (Mouse)).